The chain runs to 277 residues: Undecaprenyl-diphosphatase 1 (277 aa).

7 consecutive transmembrane segments (helical) span residues 46–66 (VVGF…VYFF), 95–115 (WWVI…KSLI), 119–139 (LASL…MWAA), 165–185 (ILAL…TALI), 191–211 (VAAT…AGLY), 216–236 (ALGT…SFVV), and 256–276 (FVIY…TGVL).

This sequence belongs to the UppP family.

It is found in the cell membrane. The enzyme catalyses di-trans,octa-cis-undecaprenyl diphosphate + H2O = di-trans,octa-cis-undecaprenyl phosphate + phosphate + H(+). In terms of biological role, catalyzes the dephosphorylation of undecaprenyl diphosphate (UPP). Confers resistance to bacitracin. The protein is Undecaprenyl-diphosphatase 1 of Streptomyces avermitilis (strain ATCC 31267 / DSM 46492 / JCM 5070 / NBRC 14893 / NCIMB 12804 / NRRL 8165 / MA-4680).